A 153-amino-acid chain; its full sequence is MAHPLIPRIVTCAEPIAAELGLEVVDVVFQTNKKPPVLRIDVRNLSQDTGLEDCERFSRLLDPQLEAQEIIPGAYVLEVSSPGTDRNLTTDREFIAFRGFPVRVKTYAPYKDQKEWCGTLRERDEAAIHLNLKGKAIAIPRELVAKVQLDDQP.

It belongs to the RimP family.

It is found in the cytoplasm. Functionally, required for maturation of 30S ribosomal subunits. The protein is Ribosome maturation factor RimP of Picosynechococcus sp. (strain ATCC 27264 / PCC 7002 / PR-6) (Agmenellum quadruplicatum).